Consider the following 175-residue polypeptide: Di-N-acetylchitobiase (175 aa).

An N-terminal signal peptide occupies residues 1-38 (MARLQLAGSRRLVPLPRRAPRLAPLLLPLLLALPDGAR). Residues 39-175 (ADCPCKVPAL…SFHHEIKGSQ (137 aa)) enclose the GH18 domain. An N-linked (GlcNAc...) asparagine glycan is attached at asparagine 115. Glutamate 143 acts as the Proton donor in catalysis.

Belongs to the glycosyl hydrolase 18 family.

Its subcellular location is the lysosome. Involved in the degradation of asparagine-linked glycoproteins. Hydrolyze of N-acetyl-beta-D-glucosamine (1-4)N-acetylglucosamine chitobiose core from the reducing end of the bond, it requires prior cleavage by glycosylasparaginase. This is Di-N-acetylchitobiase (CTBS) from Bos taurus (Bovine).